Reading from the N-terminus, the 422-residue chain is Osteomodulin (422 aa).

An N-terminal signal peptide occupies residues 1 to 20; the sequence is MGFSSLVCVLFFFLGVKVYC. The propeptide occupies 21 to 27; the sequence is QYESYQW. Sulfotyrosine is present on residues Tyr22, Tyr25, Tyr31, Tyr39, Tyr51, and Tyr77. The 39-residue stretch at 53 to 91 folds into the LRRNT domain; the sequence is APFHQHTLGCASECFCPPNFPSSMYCDNRKLKTIPNIPA. 11 LRR repeats span residues 92 to 113, 116 to 129, 142 to 164, 165 to 184, 187 to 207, 213 to 233, 234 to 255, 258 to 280, 281 to 294, 301 to 322, and 331 to 353; these read HIQQVYLQFNEIEAVTADSFIN, HLKEINLSHNKIKS, NLLQLHLQHNNLEDFPFPLPKSL, ERIFLGYNEISRLQTNAVNG, NLTMLDLCFNKIDDSVLQEKV, KLMQLNLCNNRLESMPPGLPS, SLMYLSLENNSISSIPENYFNK, KLHALRISHNKLQDIPYNIFNLS, NLIELNVGHNKLKQ, NLEHLYLENNEIENVNVTVMCP, and HLTHIRIDQNKLKAPISSYIFLC. 2 N-linked (GlcNAc...) asparagine glycosylation sites follow: Asn113 and Asn121. Asn187 carries N-linked (GlcNAc...) asparagine glycosylation. Asn242 and Asn278 each carry an N-linked (GlcNAc...) asparagine glycan. Asn316 carries an N-linked (GlcNAc...) asparagine glycan. Cys321 and Cys353 are joined by a disulfide. The disordered stretch occupies residues 385–422; sequence DDGDSEDHDDHHEGPEEEGTEENIDAHYYGSQEWQETI. Tyr412 and Tyr413 each carry sulfotyrosine.

It belongs to the small leucine-rich proteoglycan (SLRP) family. SLRP class II subfamily. As to quaternary structure, binds the alpha(V)beta(3)-integrin. Post-translationally, the N-terminus is blocked. In terms of processing, glycosylated; contains keratan sulfate. Sulfated on tyrosine residue(s). As to expression, bone specific (at protein level).

It is found in the secreted. The protein localises to the extracellular space. It localises to the extracellular matrix. In terms of biological role, may be implicated in biomineralization processes. Has a function in binding of osteoblasts via the alpha(V)beta(3)-integrin. The polypeptide is Osteomodulin (OMD) (Bos taurus (Bovine)).